The following is an 860-amino-acid chain: DNA gyrase subunit A (860 aa).

The Topo IIA-type catalytic domain occupies 34–503 (LPDARDGLKP…EDGELIDTDL (470 aa)). The O-(5'-phospho-DNA)-tyrosine intermediate role is filled by Tyr-122. Positions 530–536 (QNRATRG) match the GyrA-box motif.

This sequence belongs to the type II topoisomerase GyrA/ParC subunit family. In terms of assembly, heterotetramer, composed of two GyrA and two GyrB chains. In the heterotetramer, GyrA contains the active site tyrosine that forms a transient covalent intermediate with DNA, while GyrB binds cofactors and catalyzes ATP hydrolysis.

The protein localises to the cytoplasm. The catalysed reaction is ATP-dependent breakage, passage and rejoining of double-stranded DNA.. Functionally, a type II topoisomerase that negatively supercoils closed circular double-stranded (ds) DNA in an ATP-dependent manner to modulate DNA topology and maintain chromosomes in an underwound state. Negative supercoiling favors strand separation, and DNA replication, transcription, recombination and repair, all of which involve strand separation. Also able to catalyze the interconversion of other topological isomers of dsDNA rings, including catenanes and knotted rings. Type II topoisomerases break and join 2 DNA strands simultaneously in an ATP-dependent manner. The chain is DNA gyrase subunit A from Synechocystis sp. (strain ATCC 27184 / PCC 6803 / Kazusa).